The primary structure comprises 198 residues: ATP-dependent Clp protease proteolytic subunit 1 (198 aa).

The active-site Nucleophile is the Ser98. Residue His123 is part of the active site.

The protein belongs to the peptidase S14 family. As to quaternary structure, fourteen ClpP subunits assemble into 2 heptameric rings which stack back to back to give a disk-like structure with a central cavity, resembling the structure of eukaryotic proteasomes.

Its subcellular location is the cytoplasm. It catalyses the reaction Hydrolysis of proteins to small peptides in the presence of ATP and magnesium. alpha-casein is the usual test substrate. In the absence of ATP, only oligopeptides shorter than five residues are hydrolyzed (such as succinyl-Leu-Tyr-|-NHMec, and Leu-Tyr-Leu-|-Tyr-Trp, in which cleavage of the -Tyr-|-Leu- and -Tyr-|-Trp bonds also occurs).. Functionally, cleaves peptides in various proteins in a process that requires ATP hydrolysis. Has a chymotrypsin-like activity. Plays a major role in the degradation of misfolded proteins. The protein is ATP-dependent Clp protease proteolytic subunit 1 of Leptospira interrogans serogroup Icterohaemorrhagiae serovar copenhageni (strain Fiocruz L1-130).